The chain runs to 1124 residues: Regulator of nonsense transcripts 1 (1124 aa).

Residues 1–410 (MSVEAYGPSS…LRSSVGAPVE (410 aa)) form a sufficient for interaction with RENT2 region. Phosphoserine is present on residues S10 and S31. The tract at residues 39–69 (TLPSQTQTPPGGPGGAGGPGGAGAGGAAGQL) is disordered. Residues 51-66 (PGGAGGPGGAGAGGAA) are compositionally biased toward gly residues. One can recognise a Upf1 CH-rich domain in the interval 110–267 (TKDLPVHACS…NKLEELWKEN (158 aa)). Residues C118, C121, C132, S135, C140, H150, H154, C160, C178, C181, C204, and C208 each coordinate Zn(2+). Residues 118 to 150 (CSYCGIHDPACVVYCNTSKKWFCNGRGNTSGSH) form a C3H region. The tract at residues 132 to 160 (CNTSKKWFCNGRGNTSGSHIVNHLVRAKC) is CC/SHH/C. The segment at 178–208 (CYNCGCRNVFLLGFIPAKADSVVVLLCRQPC) is C4. Residues Q481 and 501–505 (GTGKT) each bind ATP. Residue S560 is modified to Phosphoserine. Residues Q671, Y708, and E839 each coordinate ATP. S951 is subject to Phosphoserine. 2 disordered regions span residues 1004-1053 (FGQA…VASQ) and 1066-1091 (SMSQ…YLGD). An Omega-N-methylarginine modification is found at R1014. The segment covering 1020-1029 (KTGRGGRQKN) has biased composition (basic residues). A compositionally biased stretch (polar residues) spans 1036-1053 (PSQTTLPNSQASQDVASQ). Residues 1066-1081 (SMSQPSQMSQPGLSQP) are compositionally biased toward low complexity. Residues S1084, S1102, S1105, and S1122 each carry the phosphoserine modification. Short sequence motifs ([ST]-Q motif) lie at residues 1084–1085 (SQ) and 1102–1103 (SQ). Positions 1105 to 1124 (STYQGERAYQHGGVTGLSQY) are disordered.

This sequence belongs to the DNA2/NAM7 helicase family. In terms of assembly, found in a post-splicing messenger ribonucleoprotein (mRNP) complex. Associates with the exon junction complex (EJC). Associates with the SGM1C complex; is phosphorylated by the complex kinase component SGM1. Part of a complex composed of SMG1, DHX34 and UPF1; within the complex DHX34 acts as a scaffolding protein to facilitate SMG1 phosphorylation of UPF1. Interacts with UPF2. Interacts with UPF3A and UPF3B. Interacts with EST1A. Interacts with SLBP. Interacts (when hyperphosphorylated) with PNRC2. Interacts with AGO1 and AGO2. Interacts with GSPT2. Interacts with isoform 1 and isoform 5 of ADAR/ADAR1. Interacts with SMG7. Interacts with ZC3H12A; this interaction occurs in a mRNA translationally active- and termination-dependent manner and is essential for ZC3H12A-mediated degradation of target mRNAs. Interacts with CPSF6. Interacts with MOV10; the interaction is direct and RNA-dependent. Interacts with SHFL; the interaction increases in the presence of RNA. Interacts with UPF2 and DDX4; interactions are mediated by TDRD6. Interacts with DHX34 and PABPC1/PABP1; the interactions are RNA-independent. Interacts with RBM46. Post-translationally, phosphorylated by SMG1; required for formation of mRNA surveillance complexes. In terms of tissue distribution, localizes in male germ cells.

The protein resides in the cytoplasm. It is found in the P-body. Its subcellular location is the nucleus. The protein localises to the perinuclear region. It catalyses the reaction ATP + H2O = ADP + phosphate + H(+). Its function is as follows. RNA-dependent helicase required for nonsense-mediated decay (NMD) of aberrant mRNAs containing premature stop codons and modulates the expression level of normal mRNAs. Is recruited to mRNAs upon translation termination and undergoes a cycle of phosphorylation and dephosphorylation; its phosphorylation appears to be a key step in NMD. Recruited by release factors to stalled ribosomes together with the SMG1C protein kinase complex to form the transient SURF (SMG1-UPF1-eRF1-eRF3) complex. In EJC-dependent NMD, the SURF complex associates with the exon junction complex (EJC) (located 50-55 or more nucleotides downstream from the termination codon) through UPF2 and allows the formation of an UPF1-UPF2-UPF3 surveillance complex which is believed to activate NMD. Phosphorylated UPF1 is recognized by EST1B/SMG5, SMG6 and SMG7 which are thought to provide a link to the mRNA degradation machinery involving exonucleolytic and endonucleolytic pathways, and to serve as adapters to protein phosphatase 2A (PP2A), thereby triggering UPF1 dephosphorylation and allowing the recycling of NMD factors. UPF1 can also activate NMD without UPF2 or UPF3, and in the absence of the NMD-enhancing downstream EJC indicative for alternative NMD pathways. Plays a role in replication-dependent histone mRNA degradation at the end of phase S; the function is independent of UPF2. For the recognition of premature termination codons (PTC) and initiation of NMD a competitive interaction between UPF1 and PABPC1 with the ribosome-bound release factors is proposed. The ATPase activity of UPF1 is required for disassembly of mRNPs undergoing NMD. Together with UPF2 and dependent on TDRD6, mediates the degradation of mRNA harboring long 3'UTR by inducing the NMD machinery. Also capable of unwinding double-stranded DNA and translocating on single-stranded DNA. In Mus musculus (Mouse), this protein is Regulator of nonsense transcripts 1.